A 225-amino-acid polypeptide reads, in one-letter code: Glutathione S-transferase U3 (225 aa).

The region spanning 6–86 is the GST N-terminal domain; the sequence is EGVKLIGSWA…YIDQTWTNNP (81 aa). Glutathione contacts are provided by residues 16–17, 43–44, 57–58, and 70–71; these read SP, VK, KV, and ES. The 128-residue stretch at 91 to 218 folds into the GST C-terminal domain; sequence SPYDKAMARF…EKHIEHMMKI (128 aa). Residue Thr-152 is modified to Phosphothreonine.

The protein belongs to the GST superfamily. Tau family.

The protein resides in the cytoplasm. The protein localises to the cytosol. The catalysed reaction is RX + glutathione = an S-substituted glutathione + a halide anion + H(+). Its function is as follows. May be involved in the conjugation of reduced glutathione to a wide number of exogenous and endogenous hydrophobic electrophiles and have a detoxification role against certain herbicides. The protein is Glutathione S-transferase U3 (GSTU3) of Arabidopsis thaliana (Mouse-ear cress).